A 128-amino-acid polypeptide reads, in one-letter code: 3-aminoacrylate deaminase RutC (128 aa).

It belongs to the RutC family. In terms of assembly, homotrimer.

It carries out the reaction (Z)-3-aminoacrylate + H2O + H(+) = 3-oxopropanoate + NH4(+). In terms of biological role, involved in pyrimidine catabolism. Catalyzes the deamination of 3-aminoacrylate to malonic semialdehyde, a reaction that can also occur spontaneously. RutC may facilitate the reaction and modulate the metabolic fitness, rather than catalyzing essential functions. This is 3-aminoacrylate deaminase RutC from Escherichia coli O157:H7.